The following is a 515-amino-acid chain: 2,3-bisphosphoglycerate-independent phosphoglycerate mutase (515 aa).

Asp14 and Ser64 together coordinate Mn(2+). The active-site Phosphoserine intermediate is Ser64. Substrate-binding positions include His125, 155-156 (RD), Arg187, Arg193, 263-266 (RADR), and Lys337. Asp404, His408, Asp445, His446, and His464 together coordinate Mn(2+).

It belongs to the BPG-independent phosphoglycerate mutase family. In terms of assembly, monomer. Mn(2+) serves as cofactor.

It catalyses the reaction (2R)-2-phosphoglycerate = (2R)-3-phosphoglycerate. The protein operates within carbohydrate degradation; glycolysis; pyruvate from D-glyceraldehyde 3-phosphate: step 3/5. Catalyzes the interconversion of 2-phosphoglycerate and 3-phosphoglycerate. The protein is 2,3-bisphosphoglycerate-independent phosphoglycerate mutase of Pseudomonas paraeruginosa (strain DSM 24068 / PA7) (Pseudomonas aeruginosa (strain PA7)).